We begin with the raw amino-acid sequence, 146 residues long: Putative pre-16S rRNA nuclease (146 aa).

Belongs to the YqgF nuclease family.

The protein localises to the cytoplasm. In terms of biological role, could be a nuclease involved in processing of the 5'-end of pre-16S rRNA. The protein is Putative pre-16S rRNA nuclease of Burkholderia thailandensis (strain ATCC 700388 / DSM 13276 / CCUG 48851 / CIP 106301 / E264).